Here is a 402-residue protein sequence, read N- to C-terminus: 2-pyrone synthase (402 aa).

Acetoacetyl-CoA contacts are provided by lysine 60, arginine 63, cysteine 169, leucine 272, arginine 274, glycine 310, arginine 312, and alanine 313. Cysteine 169 is an active-site residue.

This sequence belongs to the thiolase-like superfamily. Chalcone/stilbene synthases family. Expressed in both vegetative and reproductive organs. The expression is strong in the leaf, scape (the inflorescence stem) and corolla (both in the ligule and the unpigmented tube), moderate in the bract and carpel, detectable in the root and pappus but not detectable in the stamen.

The catalysed reaction is 2 malonyl-CoA + acetyl-CoA + 2 H(+) = triacetate lactone + 2 CO2 + 3 CoA. Functionally, polyketide synthase, which uses acetyl-CoA and two condensation reactions with malonyl-CoA to form triacetic acid lactone (also called methylpyrone), a precursor of phytoalexin. May participate in insect and pathogen resistance. The protein is 2-pyrone synthase of Gerbera hybrida (Daisy).